We begin with the raw amino-acid sequence, 166 residues long: Sec-independent protein translocase protein TatB (166 aa).

A helical transmembrane segment spans residues 2–22; that stretch reads FDGIGFMELLLIGVLGLVVLG. The interval 69-166 is disordered; that stretch reads SKGLSNLSPE…DTRSNPKANG (98 aa). Polar residues-rich tracts occupy residues 88 to 97 and 112 to 132; these read QAAQSVNRPY and QIHSPVASTVQTSPAQASQAN. Positions 133–153 are enriched in low complexity; it reads PTATVEASPTSASPATPSEPS. The span at 155-166 shows a compositional bias: polar residues; that stretch reads GADTRSNPKANG.

The protein belongs to the TatB family. The Tat system comprises two distinct complexes: a TatABC complex, containing multiple copies of TatA, TatB and TatC subunits, and a separate TatA complex, containing only TatA subunits. Substrates initially bind to the TatABC complex, which probably triggers association of the separate TatA complex to form the active translocon.

The protein resides in the cell inner membrane. Functionally, part of the twin-arginine translocation (Tat) system that transports large folded proteins containing a characteristic twin-arginine motif in their signal peptide across membranes. Together with TatC, TatB is part of a receptor directly interacting with Tat signal peptides. TatB may form an oligomeric binding site that transiently accommodates folded Tat precursor proteins before their translocation. This chain is Sec-independent protein translocase protein TatB, found in Shewanella baltica (strain OS223).